Here is a 321-residue protein sequence, read N- to C-terminus: Polygalacturonan/rhamnogalacturonan transport system permease protein YteP (321 aa).

The ABC transmembrane type-1 domain maps to 1–144 (MKTAEAQAPA…YIPHFMSWVI (144 aa)). Transmembrane regions (helical) follow at residues 21–41 (RKRL…ILPG), 63–83 (YQPF…FIRL), and 123–143 (IALF…MSWV).

This sequence belongs to the binding-protein-dependent transport system permease family. The complex is probably composed of two ATP-binding proteins (MsmX), two transmembrane proteins (YtcP and YteP) and a solute-binding protein (YtcQ).

Its subcellular location is the cell membrane. Functionally, involved in pectin degradation. Part of the ABC transporter complex YtcQP-YteP involved in the uptake of polygalacturonan and rhamnogalacturonan type I. Responsible for the translocation of the substrate across the membrane. The chain is Polygalacturonan/rhamnogalacturonan transport system permease protein YteP (yteP) from Bacillus subtilis (strain 168).